The chain runs to 271 residues: Cobalt import ATP-binding protein CbiO (271 aa).

Positions 2–236 (LATSDLWFRY…TEAMEHAGLT (235 aa)) constitute an ABC transporter domain. 34 to 41 (GANGCGKS) contributes to the ATP binding site.

This sequence belongs to the ABC transporter superfamily. Cobalt importer (TC 3.A.1.18.1) family. As to quaternary structure, forms an energy-coupling factor (ECF) transporter complex composed of an ATP-binding protein (A component, CbiO), a transmembrane protein (T component, CbiQ) and 2 possible substrate-capture proteins (S components, CbiM and CbiN) of unknown stoichimetry.

The protein localises to the cell inner membrane. The protein operates within cofactor biosynthesis; adenosylcobalamin biosynthesis. Part of the energy-coupling factor (ECF) transporter complex CbiMNOQ involved in cobalt import. Presumably responsible for energy coupling to the transport system. This chain is Cobalt import ATP-binding protein CbiO, found in Salmonella paratyphi A (strain ATCC 9150 / SARB42).